Here is a 332-residue protein sequence, read N- to C-terminus: Phospholipase A2 inhibitor beta (332 aa).

Positions 1–23 (MKSSVPSLLFVSLVMSLNSYTQQ) are cleaved as a signal peptide. Asn-35 carries an N-linked (GlcNAc...) asparagine glycan. 8 LRR repeats span residues 78-101 (LPNLQELHLSNNRLKTLPSGLFRN), 103-125 (PELHTLDLSTNLLEDLPPEIFTS), 127-149 (TSLTLLSISENRLAKLRLSWFET), 150-173 (LKELRILSLDNNQLKEVPISCFDK), 175-197 (EKLTFLDLSSNHLHRLSPDMFSG), 198-221 (LDNLERLSLENNPIRCIAPKSFHG), 223-245 (PKLSIISLKNCSLTNIITGVFQP), and 247-269 (NHXVLLDLSDNELTMLDPPVAIP). N-linked (GlcNAc...) asparagine glycosylation occurs at Asn-232. N-linked (GlcNAc...) asparagine glycosylation is present at Asn-272. The 52-residue stretch at 280-331 (NPWACNCRMDNLLTWVKEHKIDLYSKQEIVCAFPKSFKGEEATSLHRSQICP) folds into the LRRCT domain.

It belongs to the beta-type phospholipase A2 inhibitor family. As to quaternary structure, homotrimer.

The protein localises to the secreted. Functionally, inhibits the enzymatic activity of the basic phospholipase A2 (PLA2). The sequence is that of Phospholipase A2 inhibitor beta from Elaphe climacophora (Japanese rat snake).